The primary structure comprises 41 residues: TDCGMLQRIKVKQQWASVYSSGIAREDFGEAIWKAVFALAP.

The 40-residue stretch at 2-41 (DCGMLQRIKVKQQWASVYSSGIAREDFGEAIWKAVFALAP) folds into the Globin domain.

This sequence belongs to the globin family. As to quaternary structure, giant hemoglobin is composed of four heme-containing chains (AI to AIV), and two linker chains (AV and AVI).

The polypeptide is Giant hemoglobin AI chain (Lamellibrachia sp. (Deep-sea giant tube worm)).